Consider the following 249-residue polypeptide: DNA polymerase sliding clamp (249 aa).

Belongs to the PCNA family. In terms of assembly, the subunits circularize to form a toroid; DNA passes through its center. Replication factor C (RFC) is required to load the toroid on the DNA. Homotrimer. Interacts with NucS.

Sliding clamp subunit that acts as a moving platform for DNA processing. Responsible for tethering the catalytic subunit of DNA polymerase and other proteins to DNA during high-speed replication. Regulates activity of NucS endonuclease and prevents non-specific cleavage. The polypeptide is DNA polymerase sliding clamp (Pyrococcus abyssi (strain GE5 / Orsay)).